Reading from the N-terminus, the 455-residue chain is Post-transcriptional regulator MTA (455 aa).

Residues 17–163 (DSVSSSEFDE…QVNCQRQDDD (147 aa)) are disordered. Positions 23–42 (EFDESRDDETDAPTLEDEQL) are enriched in acidic residues. Low complexity predominate over residues 88–98 (SPLSRPRSPSP). Short sequence motifs (nuclear localization signal) lie at residues 101 to 107 (RYGKKIK), 121 to 130 (KRPRRRPRDR), and 143 to 152 (RAAPKRATRR). Residues Cys-333, His-423, Cys-427, and Cys-432 each contribute to the Zn(2+) site. A CHC2-type zinc finger spans residues 333–432 (CVFDKQSELA…HHSLCRNSEC (100 aa)).

The protein belongs to the HHV-1 ICP27 protein family. As to quaternary structure, homodimer. Homodimerization is required for transactivation. Interacts with host ALYREF. Associates in a complex with RNA, and host export factors NXF1/TAP and ALYREF; these interactions allow nuclear export of viral transcripts. Interacts with protein K-bZIP/K8; this interaction promotes viral gene expression during lytic infection. Interacts with host PABPC1. Interacts with host AGO2 and TNRC6A; these interactions inhibit host P-body formation. Interacts with PRKRA and EIF2AK2/PKR; these interactions inhibit host stress granule formation. Proteolytically cleaved by host caspase-7 (CASP7), leading to its inactivation, thereby preventing expression of viral lytic genes.

The protein localises to the host cytoplasm. It localises to the host nucleus. Its function is as follows. Post-transcriptional regulator that plays an essential role in the expression of viral lytic genes and productive viral replication. Possesses numerous activities that promote the expression of viral genes including enhancement of RNA stability, promotion of RNA splicing and stimulation of protein translation often via its ability to interact with different cellular cofactors. Stabilizes polyadenylated nuclear (PAN) RNA by cooperative binding to a 9-nt core of the MRE (MTA responsive element) together with host PABPC1. Functions as a viral splicing factor and promotes expression of intron-containing viral lytic genes. Protects viral transcripts from specific nuclear RNA decay pathways by preventing host MTREX recruitment that promotes unwinding and degradation of structured RNA substrates. Plays a role in the inhibition of host P-body formation by altering the scaffolding activity of TNRC6A at the initial stage thereby enhancing virus production. Also inhibits host stress granule formation by blocking autophosphorylation of EIF2AK2/PKR and its subsequent binding to dsRNA. This is Post-transcriptional regulator MTA from Human herpesvirus 8 type P (isolate GK18) (HHV-8).